The primary structure comprises 582 residues: Protein NARROW LEAF 1 (582 aa).

Disordered stretches follow at residues 1–26 (MKPS…VDHQ) and 531–582 (GMSP…DLEK). A compositionally biased stretch (basic and acidic residues) spans 562–572 (LGDREPKRLRS). Residues 567–573 (PKRLRSD) carry the Nuclear localization signal motif. Low complexity predominate over residues 573-582 (DSGSSLDLEK).

Expressed in leaf sheaths, leaf blades, culms and panicles. Preferentially expressed in vascular tissues in leaves and culms.

The protein localises to the nucleus. It localises to the nucleoplasm. The protein resides in the cytoplasm. Functionally, involved in the regulation of lateral leaf growth. May be involved in the regulation of basipetal polar auxin transport (PAT) and vascular patterning in leaves. Controls photosynthesis rate by regulating carboxylation efficiency and consequently photosynthesis rate. Controls panicle and spikelet numbers, and grain yield. This is Protein NARROW LEAF 1 from Oryza sativa subsp. japonica (Rice).